The sequence spans 377 residues: MSVVSKGLENVIIKVTNLTFIDGEKGILRYRGYNIEDLVNYGSYEETIYLMLYGKLPTKKELNDLKAKLNEEYEVPQEVLDTIYLMPKEADAIGLLEVGTAALASIDKNFKWKENDKEKAISIIAKMATLVANVYRRKEGNKPRIPEPSDSFAKSFLLASFAREPTTDEINAMDKALILYTDHEVPASTTAALVAASTLSDMYSSLTAALAALKGPLHGGAAEEAFKQFIEIGDPNRVQNWFNDKVVNQKNRLMGFGHRVYKTYDPRAKIFKKLALTLIERNADARRYFEIAQKLEELGIKQFSSKGIYPNTDFYSGIVFYALGFPVYMFTALFALSRTLGWLAHIIEYVEEQHRLIRPRALYVGPEYQEYVSIDKR.

Active-site residues include H258 and D313.

Belongs to the citrate synthase family. Homodimer. In terms of processing, the N-terminus is blocked by acetylation.

The enzyme catalyses oxaloacetate + acetyl-CoA + H2O = citrate + CoA + H(+). The protein operates within carbohydrate metabolism; tricarboxylic acid cycle; isocitrate from oxaloacetate: step 1/2. Its activity is regulated as follows. Allosterically inhibited by NADH. In Saccharolobus solfataricus (strain ATCC 35092 / DSM 1617 / JCM 11322 / P2) (Sulfolobus solfataricus), this protein is Citrate synthase (gltA).